The following is a 476-amino-acid chain: Trigger factor (476 aa).

The region spanning 174 to 261 (GDIAVVSFKG…LKDLKEKELP (88 aa)) is the PPIase FKBP-type domain. The disordered stretch occupies residues 436–476 (KENTTKTSKTTKNSKTTKATKTTKTTKTTKTSKTQNKKEKK). Low complexity predominate over residues 440 to 469 (TKTSKTTKNSKTTKATKTTKTTKTTKTSKT).

It belongs to the FKBP-type PPIase family. Tig subfamily.

It is found in the cytoplasm. It carries out the reaction [protein]-peptidylproline (omega=180) = [protein]-peptidylproline (omega=0). In terms of biological role, involved in protein export. Acts as a chaperone by maintaining the newly synthesized protein in an open conformation. Functions as a peptidyl-prolyl cis-trans isomerase. The sequence is that of Trigger factor from Prochlorococcus marinus (strain MIT 9215).